Reading from the N-terminus, the 228-residue chain is MAVTFSDLHTERGLKTLEEHLAGKTYISGDQLSVDDVKVYAAVLENPGDGFPNASKWYDSVASHLAKSFPGKADGVRVGGGVAPPSEAHPHTEEPAADGDGDDDDDIDLFADETEDEKKAAEEREAAKKDTKKTKESGKSSVLLEVKPWDDETDMKKLEEAVRSVQMPGLTWGASKLVPVGYGIKKLTIMMTIVDDLVSVDNLIEDHLTSEPNNEYIQSVDIVAFNKI.

Residue Ala-2 is modified to N-acetylalanine. The 52-residue stretch at 14-65 (LKTLEEHLAGKTYISGDQLSVDDVKVYAAVLENPGDGFPNASKWYDSVASHL) folds into the GST C-terminal domain. Residues 75-139 (GVRVGGGVAP…DTKKTKESGK (65 aa)) form a disordered region. Positions 95-115 (PAADGDGDDDDDIDLFADETE) are enriched in acidic residues. The span at 116 to 138 (DEKKAAEEREAAKKDTKKTKESG) shows a compositional bias: basic and acidic residues.

The protein belongs to the EF-1-beta/EF-1-delta family. As to quaternary structure, EF-1 is composed of 4 subunits: alpha, beta (1B-alpha=beta'), delta (1B-beta), and gamma (1B-gamma).

The protein localises to the cell membrane. EF-1-beta and EF-1-delta stimulate the exchange of GDP bound to EF-1-alpha to GTP. This chain is Elongation factor 1-beta 1, found in Arabidopsis thaliana (Mouse-ear cress).